The following is a 56-amino-acid chain: Small ribosomal subunit protein uS14A (56 aa).

Zn(2+) is bound by residues Cys21 and Cys24. Phosphoserine is present on Ser25. 2 residues coordinate Zn(2+): Cys39 and Cys42.

Belongs to the universal ribosomal protein uS14 family. As to quaternary structure, component of the small ribosomal subunit (SSU). Mature yeast ribosomes consist of a small (40S) and a large (60S) subunit. The 40S small subunit contains 1 molecule of ribosomal RNA (18S rRNA) and 33 different proteins (encoded by 57 genes). The large 60S subunit contains 3 rRNA molecules (25S, 5.8S and 5S rRNA) and 46 different proteins (encoded by 81 genes). Zn(2+) serves as cofactor.

The protein localises to the cytoplasm. In terms of biological role, component of the ribosome, a large ribonucleoprotein complex responsible for the synthesis of proteins in the cell. The small ribosomal subunit (SSU) binds messenger RNAs (mRNAs) and translates the encoded message by selecting cognate aminoacyl-transfer RNA (tRNA) molecules. The large subunit (LSU) contains the ribosomal catalytic site termed the peptidyl transferase center (PTC), which catalyzes the formation of peptide bonds, thereby polymerizing the amino acids delivered by tRNAs into a polypeptide chain. The nascent polypeptides leave the ribosome through a tunnel in the LSU and interact with protein factors that function in enzymatic processing, targeting, and the membrane insertion of nascent chains at the exit of the ribosomal tunnel. The sequence is that of Small ribosomal subunit protein uS14A from Saccharomyces cerevisiae (strain ATCC 204508 / S288c) (Baker's yeast).